A 272-amino-acid chain; its full sequence is Exosome complex component Rrp42 (272 aa).

This sequence belongs to the RNase PH family. Rrp42 subfamily. Component of the archaeal exosome complex. Forms a hexameric ring-like arrangement composed of 3 Rrp41-Rrp42 heterodimers. The hexameric ring associates with a trimer of Rrp4 and/or Csl4 subunits.

It localises to the cytoplasm. Its function is as follows. Non-catalytic component of the exosome, which is a complex involved in RNA degradation. Contributes to the structuring of the Rrp41 active site. The polypeptide is Exosome complex component Rrp42 (Thermococcus onnurineus (strain NA1)).